The chain runs to 179 residues: Probable RNA 2'-phosphotransferase (179 aa).

It belongs to the KptA/TPT1 family.

Functionally, removes the 2'-phosphate from RNA via an intermediate in which the phosphate is ADP-ribosylated by NAD followed by a presumed transesterification to release the RNA and generate ADP-ribose 1''-2''-cyclic phosphate (APPR&gt;P). May function as an ADP-ribosylase. The polypeptide is Probable RNA 2'-phosphotransferase (Fusobacterium nucleatum subsp. nucleatum (strain ATCC 25586 / DSM 15643 / BCRC 10681 / CIP 101130 / JCM 8532 / KCTC 2640 / LMG 13131 / VPI 4355)).